The chain runs to 281 residues: NADPH-dependent 7-cyano-7-deazaguanine reductase (281 aa).

89-91 contacts substrate; that stretch reads VES. 91 to 92 is a binding site for NADPH; that stretch reads SK. Cys-188 serves as the catalytic Thioimide intermediate. Asp-195 serves as the catalytic Proton donor. Residue 227–228 participates in substrate binding; sequence HE. Position 256–257 (256–257) interacts with NADPH; that stretch reads RG.

This sequence belongs to the GTP cyclohydrolase I family. QueF type 2 subfamily. As to quaternary structure, homodimer.

It is found in the cytoplasm. The catalysed reaction is 7-aminomethyl-7-carbaguanine + 2 NADP(+) = 7-cyano-7-deazaguanine + 2 NADPH + 3 H(+). It participates in tRNA modification; tRNA-queuosine biosynthesis. Its function is as follows. Catalyzes the NADPH-dependent reduction of 7-cyano-7-deazaguanine (preQ0) to 7-aminomethyl-7-deazaguanine (preQ1). The protein is NADPH-dependent 7-cyano-7-deazaguanine reductase of Azoarcus sp. (strain BH72).